A 331-amino-acid polypeptide reads, in one-letter code: C-type lectin domain family 4 member K (331 aa).

The Cytoplasmic segment spans residues 1 to 41 (MPEAEMKEEAPEAHFTVDKQNISLWPREPPPKQDLSPVLRK). The chain crosses the membrane as a helical; Signal-anchor for type II membrane protein span at residues 42-62 (PLCICVAFTCLALVLVTSIVL). Residues 63–331 (QAVFYPRLMG…CKRPYVQTTE (269 aa)) are Extracellular-facing. N90 and N116 each carry an N-linked (GlcNAc...) asparagine glycan. The stretch at 106–197 (DDAEVQMQIV…LKQQSDILEM (92 aa)) forms a coiled coil. Residues 205–323 (FSGNFYYFSR…CDNTFLFICK (119 aa)) enclose the C-type lectin domain. 2 cysteine pairs are disulfide-bonded: C226–C322 and C298–C314.

In terms of assembly, homotrimer. Expressed by Langerhans cells. Expressed in dendritic cells and by scattered cells in lymph nodes and spleen. Also detected in some non-lymphoid tissues such as lung, liver and heart.

Its subcellular location is the membrane. In terms of biological role, calcium-dependent lectin displaying mannose-binding specificity. Induces the formation of Birbeck granules (BGs); is a potent regulator of membrane superimposition and zippering. Binds to sulfated as well as mannosylated glycans, keratan sulfate (KS) and beta-glucans. Facilitates uptake of antigens and is involved in the routing and/or processing of antigen for presentation to T cells. This is C-type lectin domain family 4 member K (Cd207) from Mus musculus (Mouse).